Reading from the N-terminus, the 312-residue chain is Dihydroorotate dehydrogenase B (NAD(+)), catalytic subunit (312 aa).

FMN contacts are provided by residues S23 and 47–48; that span reads KA. Substrate contacts are provided by residues K47 and 71–75; that span reads NAIGL. N103 and N131 together coordinate FMN. N131 lines the substrate pocket. Catalysis depends on C134, which acts as the Nucleophile. 2 residues coordinate FMN: K171 and I197. 198 to 199 serves as a coordination point for substrate; sequence NT. FMN-binding positions include G223, 249–250, and 271–272; these read GG and GT.

It belongs to the dihydroorotate dehydrogenase family. Type 1 subfamily. In terms of assembly, heterotetramer of 2 PyrK and 2 PyrD type B subunits. FMN is required as a cofactor.

It localises to the cytoplasm. It carries out the reaction (S)-dihydroorotate + NAD(+) = orotate + NADH + H(+). It participates in pyrimidine metabolism; UMP biosynthesis via de novo pathway; orotate from (S)-dihydroorotate (NAD(+) route): step 1/1. In terms of biological role, catalyzes the conversion of dihydroorotate to orotate with NAD(+) as electron acceptor. This Streptococcus pneumoniae serotype 4 (strain ATCC BAA-334 / TIGR4) protein is Dihydroorotate dehydrogenase B (NAD(+)), catalytic subunit (pyrDB).